Reading from the N-terminus, the 215-residue chain is MRLILLGAPGAGKGTQAEYLSKRFSIPHISTGDILRENVKNETELGKKAKEYMDKGLLVPDEIVIEIVKDRLSKEDCKNGFLLDGFPRTIAQAEALDKVLEELGQKIDKVLNIEVPDEKILERMSGRRICKNCGASFHVIYRPPQKEGVCDVCGGELYQREDDKEETVKKRLEVYHAQTQPLIDYYKAKGLLVVAYGQEEIADTTKEVLKALGIE.

10–15 (GAGKGT) is a binding site for ATP. The tract at residues 30 to 59 (STGDILRENVKNETELGKKAKEYMDKGLLV) is NMP. AMP is bound by residues T31, R36, 57–59 (LLV), 85–88 (GFPR), and Q92. Positions 126–163 (GRRICKNCGASFHVIYRPPQKEGVCDVCGGELYQREDD) are LID. R127 provides a ligand contact to ATP. Zn(2+)-binding residues include C130 and C133. 136-137 (SF) is a binding site for ATP. Zn(2+)-binding residues include C150 and C153. AMP-binding residues include R160 and R171. Q198 is a binding site for ATP.

The protein belongs to the adenylate kinase family. In terms of assembly, monomer.

The protein localises to the cytoplasm. It catalyses the reaction AMP + ATP = 2 ADP. Its pathway is purine metabolism; AMP biosynthesis via salvage pathway; AMP from ADP: step 1/1. Functionally, catalyzes the reversible transfer of the terminal phosphate group between ATP and AMP. Plays an important role in cellular energy homeostasis and in adenine nucleotide metabolism. This Caldicellulosiruptor bescii (strain ATCC BAA-1888 / DSM 6725 / KCTC 15123 / Z-1320) (Anaerocellum thermophilum) protein is Adenylate kinase.